The sequence spans 294 residues: 4-hydroxy-tetrahydrodipicolinate synthase (294 aa).

Position 45 (Thr-45) interacts with pyruvate. The active-site Proton donor/acceptor is the Tyr-133. Lys-161 acts as the Schiff-base intermediate with substrate in catalysis. Residue Ile-203 participates in pyruvate binding.

It belongs to the DapA family. As to quaternary structure, homotetramer; dimer of dimers.

It is found in the cytoplasm. It catalyses the reaction L-aspartate 4-semialdehyde + pyruvate = (2S,4S)-4-hydroxy-2,3,4,5-tetrahydrodipicolinate + H2O + H(+). It functions in the pathway amino-acid biosynthesis; L-lysine biosynthesis via DAP pathway; (S)-tetrahydrodipicolinate from L-aspartate: step 3/4. Functionally, catalyzes the condensation of (S)-aspartate-beta-semialdehyde [(S)-ASA] and pyruvate to 4-hydroxy-tetrahydrodipicolinate (HTPA). The polypeptide is 4-hydroxy-tetrahydrodipicolinate synthase (Shewanella baltica (strain OS223)).